The chain runs to 103 residues: UPF0145 protein PTH_2690 (103 aa).

This sequence belongs to the UPF0145 family.

In Pelotomaculum thermopropionicum (strain DSM 13744 / JCM 10971 / SI), this protein is UPF0145 protein PTH_2690.